A 232-amino-acid polypeptide reads, in one-letter code: Large ribosomal subunit protein uL1 (232 aa).

This sequence belongs to the universal ribosomal protein uL1 family. As to quaternary structure, part of the 50S ribosomal subunit.

Its function is as follows. Binds directly to 23S rRNA. The L1 stalk is quite mobile in the ribosome, and is involved in E site tRNA release. Protein L1 is also a translational repressor protein, it controls the translation of the L11 operon by binding to its mRNA. In Xanthomonas axonopodis pv. citri (strain 306), this protein is Large ribosomal subunit protein uL1.